The sequence spans 209 residues: Rac-like GTP-binding protein ARAC9 (209 aa).

GTP is bound at residue 25 to 32 (GDGAVGKT). The Effector region signature appears at 47–55 (YVPTVFDNF). GTP contacts are provided by residues 72-76 (DTAGQ) and 130-133 (TKSD). The residue at position 206 (Cys206) is a Cysteine methyl ester. Cys206 carries the S-geranylgeranyl cysteine lipid modification. Residues 207–209 (HVL) constitute a propeptide, removed in mature form.

Belongs to the small GTPase superfamily. Rho family. As to quaternary structure, interacts with SPK1.

Its subcellular location is the cytoplasm. The protein localises to the membrane. Its function is as follows. Inactive GDP-bound Rho GTPases reside in the cytosol, are found in a complex with Rho GDP-dissociation inhibitors (Rho GDIs), and are released from the GDI protein in order to translocate to membranes upon activation. In Arabidopsis thaliana (Mouse-ear cress), this protein is Rac-like GTP-binding protein ARAC9 (ARAC9).